The primary structure comprises 341 residues: ATPase GET3 (341 aa).

ATP is bound at residue 34–41; it reads KGGVGKTT. Asp63 is an active-site residue. ATP-binding residues include Glu245 and Asn272. Cys283 and Cys286 together coordinate Zn(2+).

It belongs to the arsA ATPase family. Homodimer.

The protein localises to the cytoplasm. The protein resides in the endoplasmic reticulum. Functionally, ATPase required for the post-translational delivery of tail-anchored (TA) proteins to the endoplasmic reticulum. Recognizes and selectively binds the transmembrane domain of TA proteins in the cytosol. This complex then targets to the endoplasmic reticulum by membrane-bound receptors, where the tail-anchored protein is released for insertion. This process is regulated by ATP binding and hydrolysis. ATP binding drives the homodimer towards the closed dimer state, facilitating recognition of newly synthesized TA membrane proteins. ATP hydrolysis is required for insertion. Subsequently, the homodimer reverts towards the open dimer state, lowering its affinity for the membrane-bound receptor, and returning it to the cytosol to initiate a new round of targeting. The sequence is that of ATPase GET3 from Ajellomyces capsulatus (strain H143) (Darling's disease fungus).